The following is a 98-amino-acid chain: Co-chaperonin GroES (98 aa).

Belongs to the GroES chaperonin family. As to quaternary structure, heptamer of 7 subunits arranged in a ring. Interacts with the chaperonin GroEL.

It is found in the cytoplasm. Functionally, together with the chaperonin GroEL, plays an essential role in assisting protein folding. The GroEL-GroES system forms a nano-cage that allows encapsulation of the non-native substrate proteins and provides a physical environment optimized to promote and accelerate protein folding. GroES binds to the apical surface of the GroEL ring, thereby capping the opening of the GroEL channel. The sequence is that of Co-chaperonin GroES from Neorickettsia sennetsu (strain ATCC VR-367 / Miyayama) (Ehrlichia sennetsu).